Reading from the N-terminus, the 485-residue chain is MKSFNTEGHNHSTAESGDAYTVSDPTKNVDEDGREKRTGTWLTASAHIITAVIGSGVLSLAWAIAQLGWIAGTSILLIFSFITYFTSTMLADCYRAPDPVTGKRNYTYMDVVRSYLGGRKVQLCGVAQYGNLIGVTVGYTITASISLVAVGKSNCFHDKGHTADCTISNYPYMAVFGIIQVILSQIPNFHKLSFLSIMAAVMSFTYATIGIGLAIATVAGGKVGKTSMTGTAVGVDVTAAQKIWRSFQAVGDIAFAYAYATVLIEIQDTLRSSPAENKAMKRASLVGVSTTTFFYILCGCIGYAAFGNNAPGDFLTDFGFFEPFWLIDFANACIAVHLIGAYQVFAQPIFQFVEKKCNRNYPDNKFITSEYSVNVPFLGKFNISLFRLVWRTAYVVITTVVAMIFPFFNAILGLIGAASFWPLTVYFPVEMHIAQTKIKKYSARWIALKTMCYVCLIVSLLAAAGSIAGLISSVKTYKPFRTMHE.

The segment covering 1 to 15 (MKSFNTEGHNHSTAE) has biased composition (polar residues). A disordered region spans residues 1 to 35 (MKSFNTEGHNHSTAESGDAYTVSDPTKNVDEDGRE). The Cytoplasmic segment spans residues 1-40 (MKSFNTEGHNHSTAESGDAYTVSDPTKNVDEDGREKRTGT). 2 consecutive transmembrane segments (helical) span residues 41 to 61 (WLTA…LSLA) and 62 to 82 (WAIA…FSFI). At 83–129 (TYFTSTMLADCYRAPDPVTGKRNYTYMDVVRSYLGGRKVQLCGVAQY) the chain is on the cytoplasmic side. Residues 130-150 (GNLIGVTVGYTITASISLVAV) form a helical membrane-spanning segment. Residues 151-166 (GKSNCFHDKGHTADCT) are Extracellular-facing. The helical transmembrane segment at 167 to 187 (ISNYPYMAVFGIIQVILSQIP) threads the bilayer. Over 188–194 (NFHKLSF) the chain is Cytoplasmic. Residues 195–215 (LSIMAAVMSFTYATIGIGLAI) traverse the membrane as a helical segment. The Extracellular segment spans residues 216–245 (ATVAGGKVGKTSMTGTAVGVDVTAAQKIWR). The chain crosses the membrane as a helical span at residues 246–266 (SFQAVGDIAFAYAYATVLIEI). At 267 to 285 (QDTLRSSPAENKAMKRASL) the chain is on the cytoplasmic side. The helical transmembrane segment at 286-306 (VGVSTTTFFYILCGCIGYAAF) threads the bilayer. Topologically, residues 307 to 318 (GNNAPGDFLTDF) are extracellular. The helical transmembrane segment at 319–339 (GFFEPFWLIDFANACIAVHLI) threads the bilayer. Topologically, residues 340–394 (GAYQVFAQPIFQFVEKKCNRNYPDNKFITSEYSVNVPFLGKFNISLFRLVWRTAY) are cytoplasmic. The next 2 helical transmembrane spans lie at 395-415 (VVIT…LGLI) and 416-436 (GAAS…IAQT). Topologically, residues 437–450 (KIKKYSARWIALKT) are cytoplasmic. A helical transmembrane segment spans residues 451–471 (MCYVCLIVSLLAAAGSIAGLI). Over 472-485 (SSVKTYKPFRTMHE) the chain is Extracellular.

The protein belongs to the amino acid/polyamine transporter 2 family. Amino acid/auxin permease (AAAP) (TC 2.A.18.2) subfamily. In terms of tissue distribution, highly expressed in developing pods. Found in the endosperm and in the storage parenchyma and the outer epidermis cells of the developing embryo. Lower levels of expression in flowers, in the vascular system of the cotyledon and in the root epidermal cells, including root hairs and throughout the root tip.

It is found in the cell membrane. Inhibited by carbonylcyanide m-chlorophenylhydrazone and diethylpyrocarbonate (DEPC). In terms of biological role, amino acid-proton symporter. Stereospecific transporter with a broad specificity for histidine, glutamate and neutral amino acids. Reduced affinities for asparagine and valine. Involved in amino acid uptake from the apoplastic cavity into the embryo cells for storage protein accumulation and in root amino acid uptake. The chain is Amino acid permease 1 (AAP1) from Arabidopsis thaliana (Mouse-ear cress).